Reading from the N-terminus, the 979-residue chain is Putative cellulose synthase-like protein D6 (979 aa).

A disordered region spans residues 1–24 (MMDGESPLRHPRISHVSNSGSDFG). Residues 14–24 (SHVSNSGSDFG) are compositionally biased toward low complexity. Helical transmembrane passes span 116–136 (IIIA…ALFL) and 147–167 (ALWL…SWLL). Catalysis depends on residues Asp-247 and Asp-683. The next 6 helical transmembrane spans lie at 765 to 785 (IFIL…HFVV), 788 to 808 (LTGS…GLAV), 837 to 857 (LVAV…SFTL), 882 to 902 (ALMI…LFAV), 913 to 933 (WSNL…MYPF), and 946 to 966 (TVVY…YITI).

The protein belongs to the glycosyltransferase 2 family. Plant cellulose synthase-like D subfamily.

Its subcellular location is the golgi apparatus membrane. Functionally, thought to be a Golgi-localized beta-glycan synthase that polymerize the backbones of noncellulosic polysaccharides (hemicelluloses) of plant cell wall. The chain is Putative cellulose synthase-like protein D6 (CSLD6) from Arabidopsis thaliana (Mouse-ear cress).